We begin with the raw amino-acid sequence, 430 residues long: Dihydroorotase (430 aa).

Zn(2+) is bound by residues H60 and H62. Residues 62–64 (HLR) and N94 contribute to the substrate site. 4 residues coordinate Zn(2+): D152, H179, H232, and D305. D305 is an active-site residue. Residues H309 and 323 to 324 (FG) each bind substrate.

It belongs to the metallo-dependent hydrolases superfamily. DHOase family. Class I DHOase subfamily. Requires Zn(2+) as cofactor.

It catalyses the reaction (S)-dihydroorotate + H2O = N-carbamoyl-L-aspartate + H(+). It participates in pyrimidine metabolism; UMP biosynthesis via de novo pathway; (S)-dihydroorotate from bicarbonate: step 3/3. Its function is as follows. Catalyzes the reversible cyclization of carbamoyl aspartate to dihydroorotate. The protein is Dihydroorotase of Solibacter usitatus (strain Ellin6076).